A 232-amino-acid polypeptide reads, in one-letter code: Peptide deformylase (232 aa).

Cysteine 135 and histidine 178 together coordinate Fe cation. The active site involves glutamate 179. Position 182 (histidine 182) interacts with Fe cation.

The protein belongs to the polypeptide deformylase family. Fe(2+) serves as cofactor.

The catalysed reaction is N-terminal N-formyl-L-methionyl-[peptide] + H2O = N-terminal L-methionyl-[peptide] + formate. Its function is as follows. Removes the formyl group from the N-terminal Met of newly synthesized proteins. Requires at least a dipeptide for an efficient rate of reaction. N-terminal L-methionine is a prerequisite for activity but the enzyme has broad specificity at other positions. The polypeptide is Peptide deformylase (Deinococcus radiodurans (strain ATCC 13939 / DSM 20539 / JCM 16871 / CCUG 27074 / LMG 4051 / NBRC 15346 / NCIMB 9279 / VKM B-1422 / R1)).